The primary structure comprises 158 residues: Endoribonuclease YbeY (158 aa).

3 residues coordinate Zn(2+): His118, His122, and His128.

Belongs to the endoribonuclease YbeY family. The cofactor is Zn(2+).

The protein localises to the cytoplasm. In terms of biological role, single strand-specific metallo-endoribonuclease involved in late-stage 70S ribosome quality control and in maturation of the 3' terminus of the 16S rRNA. The protein is Endoribonuclease YbeY of Bartonella henselae (strain ATCC 49882 / DSM 28221 / CCUG 30454 / Houston 1) (Rochalimaea henselae).